A 276-amino-acid chain; its full sequence is NH(3)-dependent NAD(+) synthetase (276 aa).

Position 43 to 50 (43 to 50 (GISGGVDS)) interacts with ATP. Asp-49 serves as a coordination point for Mg(2+). Residue Arg-146 coordinates deamido-NAD(+). ATP is bound at residue Thr-166. Glu-171 serves as a coordination point for Mg(2+). Deamido-NAD(+)-binding residues include Lys-179 and Asp-186. Residues Lys-195 and Thr-217 each coordinate ATP. Residue 266 to 267 (HK) coordinates deamido-NAD(+).

It belongs to the NAD synthetase family. As to quaternary structure, homodimer.

It carries out the reaction deamido-NAD(+) + NH4(+) + ATP = AMP + diphosphate + NAD(+) + H(+). Its pathway is cofactor biosynthesis; NAD(+) biosynthesis; NAD(+) from deamido-NAD(+) (ammonia route): step 1/1. Catalyzes the ATP-dependent amidation of deamido-NAD to form NAD. Uses ammonia as a nitrogen source. This is NH(3)-dependent NAD(+) synthetase from Vibrio parahaemolyticus serotype O3:K6 (strain RIMD 2210633).